Consider the following 248-residue polypeptide: Calpain small subunit 2 (248 aa).

Ca(2+) is bound by residues Ala-89, Asp-92, Glu-94, Asp-117, Asp-132, Asp-134, Thr-136, Lys-138, Glu-143, Asp-162, Asp-164, Ser-166, and Asp-205. EF-hand domains lie at 119–152 (FSLD…NNIK), 149–184 (NNIK…AGFQ), 185–213 (LNEQ…ISCL), and 214–248 (VRLD…TMYS).

Heterodimer of a large (catalytic) and a small (regulatory) subunit.

The protein resides in the cytoplasm. The protein localises to the cell membrane. Functionally, calcium-regulated non-lysosomal thiol-protease which catalyzes limited proteolysis of substrates involved in cytoskeletal remodeling and signal transduction. This small subunit may act as a tissue-specific chaperone of the large subunit, possibly by helping it fold into its correct conformation for activity. This Homo sapiens (Human) protein is Calpain small subunit 2 (CAPNS2).